Reading from the N-terminus, the 337-residue chain is Biotin synthase (337 aa).

Residues Gln39–Arg267 enclose the Radical SAM core domain. Cys54, Cys58, and Cys61 together coordinate [4Fe-4S] cluster. 4 residues coordinate [2Fe-2S] cluster: Cys98, Cys130, Cys190, and Arg262.

This sequence belongs to the radical SAM superfamily. Biotin synthase family. As to quaternary structure, homodimer. The cofactor is [4Fe-4S] cluster. [2Fe-2S] cluster serves as cofactor.

The enzyme catalyses (4R,5S)-dethiobiotin + (sulfur carrier)-SH + 2 reduced [2Fe-2S]-[ferredoxin] + 2 S-adenosyl-L-methionine = (sulfur carrier)-H + biotin + 2 5'-deoxyadenosine + 2 L-methionine + 2 oxidized [2Fe-2S]-[ferredoxin]. The protein operates within cofactor biosynthesis; biotin biosynthesis; biotin from 7,8-diaminononanoate: step 2/2. Functionally, catalyzes the conversion of dethiobiotin (DTB) to biotin by the insertion of a sulfur atom into dethiobiotin via a radical-based mechanism. This is Biotin synthase from Cytophaga hutchinsonii (strain ATCC 33406 / DSM 1761 / CIP 103989 / NBRC 15051 / NCIMB 9469 / D465).